Reading from the N-terminus, the 301-residue chain is ATP synthase gamma chain (301 aa).

Belongs to the ATPase gamma chain family. In terms of assembly, F-type ATPases have 2 components, CF(1) - the catalytic core - and CF(0) - the membrane proton channel. CF(1) has five subunits: alpha(3), beta(3), gamma(1), delta(1), epsilon(1). CF(0) has three main subunits: a, b and c.

Its subcellular location is the cell inner membrane. Produces ATP from ADP in the presence of a proton gradient across the membrane. The gamma chain is believed to be important in regulating ATPase activity and the flow of protons through the CF(0) complex. The sequence is that of ATP synthase gamma chain from Bordetella bronchiseptica (strain ATCC BAA-588 / NCTC 13252 / RB50) (Alcaligenes bronchisepticus).